We begin with the raw amino-acid sequence, 282 residues long: Pantothenate synthetase (282 aa).

An ATP-binding site is contributed by 30–37 (MGYLHEGH). The active-site Proton donor is His-37. Gln-61 provides a ligand contact to (R)-pantoate. Residue Gln-61 coordinates beta-alanine. Position 147–150 (147–150 (GMKD)) interacts with ATP. Residue Gln-153 coordinates (R)-pantoate. ATP contacts are provided by residues Val-176 and 184–187 (KSSR).

The protein belongs to the pantothenate synthetase family. In terms of assembly, homodimer.

The protein localises to the cytoplasm. It catalyses the reaction (R)-pantoate + beta-alanine + ATP = (R)-pantothenate + AMP + diphosphate + H(+). Its pathway is cofactor biosynthesis; (R)-pantothenate biosynthesis; (R)-pantothenate from (R)-pantoate and beta-alanine: step 1/1. Functionally, catalyzes the condensation of pantoate with beta-alanine in an ATP-dependent reaction via a pantoyl-adenylate intermediate. The protein is Pantothenate synthetase of Bacillus cereus (strain ATCC 10987 / NRS 248).